We begin with the raw amino-acid sequence, 425 residues long: UDP-N-acetyl-D-glucosamine 6-dehydrogenase (425 aa).

NAD(+) contacts are provided by valine 17, aspartate 35, arginine 40, threonine 86, and threonine 121. Cysteine 261 serves as the catalytic Nucleophile. Arginine 332 contributes to the NAD(+) binding site.

The protein belongs to the UDP-glucose/GDP-mannose dehydrogenase family. As to quaternary structure, homotrimer.

It catalyses the reaction UDP-N-acetyl-alpha-D-glucosamine + 2 NAD(+) + H2O = UDP-2-acetamido-2-deoxy-alpha-D-glucuronate + 2 NADH + 3 H(+). Its pathway is capsule biogenesis; capsule polysaccharide biosynthesis. The protein operates within glycan metabolism; Vi-antigen biosynthesis. Its function is as follows. Dehydrogenase required for the biosynthesis of the capsular polysaccharide, commonly referred as the Vi antigen, an important virulence factor. Catalyzes the conversion of UDP-N-acetylglucosamine (UDP-GlcNAc) to UDP-N-acetylglucosaminuronic acid (UDP-GlcNAcA). Cannot use UDP-GalNAc, UDP-Glc and UDP-Gal as substrates. This is UDP-N-acetyl-D-glucosamine 6-dehydrogenase from Salmonella typhi.